A 177-amino-acid polypeptide reads, in one-letter code: Large ribosomal subunit protein uL6 (177 aa).

The protein belongs to the universal ribosomal protein uL6 family. As to quaternary structure, part of the 50S ribosomal subunit.

This protein binds to the 23S rRNA, and is important in its secondary structure. It is located near the subunit interface in the base of the L7/L12 stalk, and near the tRNA binding site of the peptidyltransferase center. In Serratia proteamaculans (strain 568), this protein is Large ribosomal subunit protein uL6.